Consider the following 495-residue polypeptide: ATP synthase subunit beta (495 aa).

ATP is bound at residue 178-185 (GGAGVGKT).

The protein belongs to the ATPase alpha/beta chains family. In terms of assembly, F-type ATPases have 2 components, CF(1) - the catalytic core - and CF(0) - the membrane proton channel. CF(1) has five subunits: alpha(3), beta(3), gamma(1), delta(1), epsilon(1). CF(0) has three main subunits: a(1), b(2) and c(9-12). The alpha and beta chains form an alternating ring which encloses part of the gamma chain. CF(1) is attached to CF(0) by a central stalk formed by the gamma and epsilon chains, while a peripheral stalk is formed by the delta and b chains.

Its subcellular location is the cell membrane. The catalysed reaction is ATP + H2O + 4 H(+)(in) = ADP + phosphate + 5 H(+)(out). Produces ATP from ADP in the presence of a proton gradient across the membrane. The catalytic sites are hosted primarily by the beta subunits. This is ATP synthase subunit beta from Bifidobacterium animalis subsp. lactis (strain AD011).